A 334-amino-acid polypeptide reads, in one-letter code: Cyclin N-terminal domain-containing protein 1 (334 aa).

Residues asparagine 29–asparagine 180 form the Cyclin N-terminal domain.

As to quaternary structure, interacts with PRR19; this interaction promotes crossover formation. Interacts with RFC3 and RFC4; these interactions facilitate crossover formation. Interacts with CDC34; this interaction regulates the cell-cycle progression. In terms of tissue distribution, isoform 2 is expressed in spermatocyte.

The protein resides in the nucleus. Its subcellular location is the cytoplasm. The protein localises to the chromosome. In terms of biological role, plays a role in the different steps of crossover formation during meiotic recombination. Participates in the crossover differentiation step of crossover-specific recombination intermediates through its interaction with PRR19. In addition, stimulates crossover formation through the interactions with RFC3 and RFC4 and simultaneously regulates cell-cycle progression through interactions with CDC34 and subsequent ubiquitination of WEE1. May also participates in an active deselection process that destabilizes or removes excess pre-CO intermediates. The chain is Cyclin N-terminal domain-containing protein 1 from Mus musculus (Mouse).